The primary structure comprises 241 residues: Accessory protein p30II (241 aa).

Short sequence motifs (nuclear localization signal) lie at residues 73–78 (RRCRSR) and 91–98 (GPRRSRPR). Positions 86 to 153 (AFPPGGPRRS…HRNSPTDTKL (68 aa)) are disordered. The segment covering 107 to 138 (PSSTVSSSSLSFNSSSKDNSPSTNSSTSRSSG) has biased composition (low complexity). A Mitochondrial targeting signal motif is present at residues 175–184 (LRVWRLCTRR).

Belongs to the HTLV-1 accessory protein p30II family. In terms of assembly, p30II binds to the KIX domains of CREBBP and EP300.

Its subcellular location is the host nucleus. The protein resides in the host nucleolus. It is found in the host mitochondrion inner membrane. Its function is as follows. p30II is a multifunctional regulator that sequesters EP300/CREBBP and down-regulates CREB-responsive element (CRE) and Tax-responsive element (TRE) mediated transcription. Specifically binds and represses tax/rex mRNA nuclear export. Since Tax and Rex are positive regulators of viral gene expression, their inhibition by p30II reduces virion production, and allows the virus to escape the host immune surveillance and persist latently in an immune-competent host. In terms of biological role, p13II increases mitochondrial permeability to monovalent cations, producing a rapid, membrane potential-dependent influx of potassium. This could involve a channel-forming activity. Interferes with cell proliferation and transformation and promotes apoptosis induced by ceramide and Fas ligand, probably using the Ras signaling. The chain is Accessory protein p30II from Human T-cell leukemia virus 1 (isolate Caribbea HS-35 subtype A) (HTLV-1).